The chain runs to 852 residues: Bifunctional uridylyltransferase/uridylyl-removing enzyme (852 aa).

The interval 1 to 318 (MPENLSSALE…STPVRVTLRI (318 aa)) is uridylyltransferase. The segment at 319 to 672 (DDDYIQVNNQ…SRILPQSDSF (354 aa)) is uridylyl-removing. Residues 436–558 (VDDHILAVVR…VQTHERLSAL (123 aa)) enclose the HD domain. ACT domains lie at 673–757 (QVMV…SCNR) and 785–852 (SVEI…EQLA).

It belongs to the GlnD family. Requires Mg(2+) as cofactor.

The enzyme catalyses [protein-PII]-L-tyrosine + UTP = [protein-PII]-uridylyl-L-tyrosine + diphosphate. It carries out the reaction [protein-PII]-uridylyl-L-tyrosine + H2O = [protein-PII]-L-tyrosine + UMP + H(+). Its activity is regulated as follows. Uridylyltransferase (UTase) activity is inhibited by glutamine, while glutamine activates uridylyl-removing (UR) activity. Functionally, modifies, by uridylylation and deuridylylation, the PII regulatory proteins (GlnB and homologs), in response to the nitrogen status of the cell that GlnD senses through the glutamine level. Under low glutamine levels, catalyzes the conversion of the PII proteins and UTP to PII-UMP and PPi, while under higher glutamine levels, GlnD hydrolyzes PII-UMP to PII and UMP (deuridylylation). Thus, controls uridylylation state and activity of the PII proteins, and plays an important role in the regulation of nitrogen assimilation and metabolism. The polypeptide is Bifunctional uridylyltransferase/uridylyl-removing enzyme (Neisseria gonorrhoeae (strain ATCC 700825 / FA 1090)).